Reading from the N-terminus, the 516-residue chain is L-amino-acid oxidase (516 aa).

The signal sequence occupies residues 1-18; sequence MNVFFMFSLLFLAALGSC. Cysteine 28 and cysteine 189 are disulfide-bonded. Residues 61–62, 81–82, arginine 89, and 103–106 each bind FAD; these read MS, EA, and GPMR. Residues arginine 106 and histidine 239 each contribute to the substrate site. Valine 279 contributes to the FAD binding site. Cysteine 349 and cysteine 430 are joined by a disulfide. Residue asparagine 379 is glycosylated (N-linked (GlcNAc...) asparagine). Tyrosine 390 is a substrate binding site. Residues glutamate 475 and 482 to 487 contribute to the FAD site; that span reads GWIDST. A substrate-binding site is contributed by 482–483; sequence GW.

It belongs to the flavin monoamine oxidase family. FIG1 subfamily. As to quaternary structure, homodimer; non-covalently linked. It depends on FAD as a cofactor. N-glycosylated. As to expression, expressed by the venom gland.

It localises to the secreted. It catalyses the reaction an L-alpha-amino acid + O2 + H2O = a 2-oxocarboxylate + H2O2 + NH4(+). In terms of biological role, catalyzes an oxidative deamination of predominantly hydrophobic and aromatic L-amino acids, thus producing hydrogen peroxide that may contribute to the diverse toxic effects of this enzyme. Exhibits diverse biological activities, such as hemorrhage, hemolysis, edema, apoptosis of vascular endothelial cells or tumor cell lines, antibacterial and antiparasitic activities, as well as regulation of platelet aggregation. Effects of snake L-amino oxidases on platelets are controversial, since they either induce aggregation or inhibit agonist-induced aggregation. These different effects are probably due to different experimental conditions. The protein is L-amino-acid oxidase of Sistrurus catenatus edwardsii (Desert massasauga).